The primary structure comprises 42 residues: Photosystem I reaction center subunit IX (42 aa).

The chain crosses the membrane as a helical span at residues 7–27 (YLSVAPVLSTLWFGILAGLLI).

It belongs to the PsaJ family.

It localises to the plastid. The protein localises to the chloroplast thylakoid membrane. Its function is as follows. May help in the organization of the PsaE and PsaF subunits. The sequence is that of Photosystem I reaction center subunit IX from Lemna minor (Common duckweed).